Reading from the N-terminus, the 306-residue chain is High osmolarity signaling protein MOS1 (306 aa).

The Cytoplasmic segment spans residues 1–23 (MEHSRPYGGRKRMSLGNILGDPF). The helical transmembrane segment at 24-44 (ALATISISLLAWFITFISCVI) threads the bilayer. Topologically, residues 45 to 67 (AQVQANKNKGLPDKDNPDGNFPP) are extracellular. A helical transmembrane segment spans residues 68–88 (FAWWAVVYSLFLIVGVVIVVA). Residues 89-96 (SDAIQTYH) are Cytoplasmic-facing. The chain crosses the membrane as a helical span at residues 97 to 117 (VAVTGYLAGGMVLVTSGVNSL). The Extracellular portion of the chain corresponds to 118 to 126 (VYSKNGARE). The chain crosses the membrane as a helical span at residues 127–147 (AAAAGFILLSMVVIVWIFYFG). The Cytoplasmic portion of the chain corresponds to 148–306 (STPSSTPRAF…IAPSNYLILL (159 aa)). The segment at 204 to 242 (FENPSPVGGASQAPTAPTMPTYGNNTMQPNNKSNDEEVL) is disordered. The segment covering 224–235 (TYGNNTMQPNNK) has biased composition (polar residues). The SH3 domain occupies 246–306 (DYPYQAKAIY…IAPSNYLILL (61 aa)).

Belongs to the SHO1 family. As to quaternary structure, forms homooligomers.

The protein localises to the cell membrane. Functionally, plasma membrane osmosensor that activates the high osmolarity glycerol (HOG) MAPK signaling pathway in response to high osmolarity. Affects fungal virulence. The chain is High osmolarity signaling protein MOS1 (MOS1) from Metarhizium robertsii (strain ARSEF 23 / ATCC MYA-3075) (Metarhizium anisopliae (strain ARSEF 23)).